The primary structure comprises 659 residues: Biosynthetic arginine decarboxylase 2 (659 aa).

The residue at position 119 (Lys119) is an N6-(pyridoxal phosphate)lysine. 311 to 321 (LNVGGGLAVDY) contributes to the substrate binding site.

Belongs to the Orn/Lys/Arg decarboxylase class-II family. SpeA subfamily. Mg(2+) is required as a cofactor. The cofactor is pyridoxal 5'-phosphate.

It carries out the reaction L-arginine + H(+) = agmatine + CO2. Functionally, catalyzes the biosynthesis of agmatine from arginine. The chain is Biosynthetic arginine decarboxylase 2 (speA2) from Synechocystis sp. (strain ATCC 27184 / PCC 6803 / Kazusa).